A 357-amino-acid chain; its full sequence is DNA integrity scanning protein DisA (357 aa).

The 139-residue stretch at 3–141 folds into the DAC domain; the sequence is RPTLRETVAR…GGERHVVADS (139 aa). ATP-binding positions include glycine 70, leucine 88, and 101–105; that span reads TRHRS.

This sequence belongs to the DisA family. In terms of assembly, homooctamer. The cofactor is Mg(2+).

It catalyses the reaction 2 ATP = 3',3'-c-di-AMP + 2 diphosphate. Its function is as follows. Participates in a DNA-damage check-point. DisA forms globular foci that rapidly scan along the chromosomes searching for lesions. Functionally, also has diadenylate cyclase activity, catalyzing the condensation of 2 ATP molecules into cyclic di-AMP (c-di-AMP). c-di-AMP likely acts as a signaling molecule that may couple DNA integrity with a cellular process. The polypeptide is DNA integrity scanning protein DisA (Mycobacterium avium (strain 104)).